Here is a 214-residue protein sequence, read N- to C-terminus: Octanoyltransferase (214 aa).

One can recognise a BPL/LPL catalytic domain in the interval 28–203; it reads GSGAETLLLL…RFEGFLDEFM (176 aa). Substrate is bound by residues 66-73, 133-135, and 146-148; these read RGGDVTYH, SIG, and GFA. Catalysis depends on C164, which acts as the Acyl-thioester intermediate.

This sequence belongs to the LipB family.

The protein localises to the cytoplasm. It carries out the reaction octanoyl-[ACP] + L-lysyl-[protein] = N(6)-octanoyl-L-lysyl-[protein] + holo-[ACP] + H(+). The protein operates within protein modification; protein lipoylation via endogenous pathway; protein N(6)-(lipoyl)lysine from octanoyl-[acyl-carrier-protein]: step 1/2. Catalyzes the transfer of endogenously produced octanoic acid from octanoyl-acyl-carrier-protein onto the lipoyl domains of lipoate-dependent enzymes. Lipoyl-ACP can also act as a substrate although octanoyl-ACP is likely to be the physiological substrate. The polypeptide is Octanoyltransferase (Geotalea uraniireducens (strain Rf4) (Geobacter uraniireducens)).